The following is a 95-amino-acid chain: Defensin-A3 (95 aa).

The first 19 residues, 1 to 19 (MRTLGLLLALLFLAAQTPA), serve as a signal peptide directing secretion. A propeptide spanning residues 20–61 (QLMGEEAEEATGRPEATEAQEAAAALMAARAADRHVTDPEQQ) is cleaved from the precursor. 3 cysteine pairs are disulfide-bonded: cysteine 66/cysteine 93, cysteine 68/cysteine 82, and cysteine 72/cysteine 92.

It belongs to the alpha-defensin family. As to expression, highly expressed in spleen, and expressed at lower levels in intestin and lung.

The protein resides in the secreted. Its function is as follows. Has antimicrobial activity. This chain is Defensin-A3, found in Ornithorhynchus anatinus (Duckbill platypus).